The following is a 244-amino-acid chain: Exosome complex component Rrp41 (244 aa).

Belongs to the RNase PH family. Rrp41 subfamily. In terms of assembly, component of the archaeal exosome complex. Forms a hexameric ring-like arrangement composed of 3 Rrp41-Rrp42 heterodimers. The hexameric ring associates with a trimer of Rrp4 and/or Csl4 subunits.

It is found in the cytoplasm. Functionally, catalytic component of the exosome, which is a complex involved in RNA degradation. Has 3'-&gt;5' exoribonuclease activity. Can also synthesize heteromeric RNA-tails. This is Exosome complex component Rrp41 from Nitrosopumilus maritimus (strain SCM1).